Here is a 278-residue protein sequence, read N- to C-terminus: Nudix hydrolase 2 (278 aa).

The Nudix hydrolase domain occupies 110–242 (SHRVGIGAFV…ELLRYMTDIC (133 aa)). Positions 147–168 (GVVNEGEDIHDGSVREVKEETG) match the Nudix box motif. E162 serves as a coordination point for Mg(2+). E165 (proton acceptor) is an active-site residue. Residue E166 participates in Mg(2+) binding.

It belongs to the Nudix hydrolase family. Requires Mg(2+) as cofactor. Mn(2+) is required as a cofactor. In terms of tissue distribution, expressed in roots, stems and leaves.

It carries out the reaction ADP-D-ribose + H2O = D-ribose 5-phosphate + AMP + 2 H(+). The catalysed reaction is NAD(+) + H2O = beta-nicotinamide D-ribonucleotide + AMP + 2 H(+). The enzyme catalyses NADH + H2O = reduced beta-nicotinamide D-ribonucleotide + AMP + 2 H(+). Its function is as follows. Probably mediates the hydrolysis of some nucleoside diphosphate derivatives. In vitro, it can use both NADH and ADP-ribose as substrates; however the relevance of such substrates in vivo is unclear. Confers tolerance to oxidative stress. The chain is Nudix hydrolase 2 from Arabidopsis thaliana (Mouse-ear cress).